A 90-amino-acid chain; its full sequence is Phosphocarrier protein NPr (90 aa).

The 89-residue stretch at 2-90 folds into the HPr domain; it reads TQYRRVAIKN…ALFESGFDED (89 aa). Residue His-16 is the Pros-phosphohistidine intermediate of the active site.

It belongs to the HPr family.

Its subcellular location is the cytoplasm. Component of the phosphoenolpyruvate-dependent nitrogen-metabolic phosphotransferase system (nitrogen-metabolic PTS), that seems to be involved in regulating nitrogen metabolism. The phosphoryl group from phosphoenolpyruvate (PEP) is transferred to the phosphoryl carrier protein NPr by enzyme I-Ntr. Phospho-NPr then transfers it to EIIA-Ntr. Could function in the transcriptional regulation of sigma-54 dependent operons in conjunction with the NPr (PtsO) and EIIA-Ntr (PtsN) proteins. This is Phosphocarrier protein NPr (ptsO) from Proteus mirabilis (strain HI4320).